Consider the following 225-residue polypeptide: Glucose-induced degradation protein 8 homolog (225 aa).

In terms of domain architecture, LisH spans 22–54; sequence QRAEMNRLIMDYLVTEGYKEAAEKFRIESGTQP. A CTLH domain is found at 60 to 117; the sequence is SLDDRIKIREAVQKGDLEQAVSMTNKLNPDILDSNQQLYFHLQQQRLIELIREKDIEA.

This sequence belongs to the GID8 family.

Its subcellular location is the cytoplasm. The protein resides in the nucleus. Its function is as follows. Core component of the CTLH E3 ubiquitin-protein ligase complex that mediates ubiquitination and subsequent proteasomal degradation of target proteins. Acts as a positive regulator of Wnt signaling pathway by promoting beta-catenin (CTNNB1) nuclear accumulation. This chain is Glucose-induced degradation protein 8 homolog, found in Nematostella vectensis (Starlet sea anemone).